The following is a 232-amino-acid chain: UPF0502 protein mma_2112 (232 aa).

It belongs to the UPF0502 family.

This Janthinobacterium sp. (strain Marseille) (Minibacterium massiliensis) protein is UPF0502 protein mma_2112.